Consider the following 98-residue polypeptide: Integration host factor subunit alpha (98 aa).

The tract at residues F52 to I73 is disordered. Residues L54–I73 show a composition bias toward basic and acidic residues.

It belongs to the bacterial histone-like protein family. As to quaternary structure, heterodimer of an alpha and a beta chain.

Functionally, this protein is one of the two subunits of integration host factor, a specific DNA-binding protein that functions in genetic recombination as well as in transcriptional and translational control. In Pseudoalteromonas atlantica (strain T6c / ATCC BAA-1087), this protein is Integration host factor subunit alpha.